The primary structure comprises 292 residues: ABC transporter ATP-binding protein YtrB (292 aa).

One can recognise an ABC transporter domain in the interval 2 to 227; that stretch reads IELRQLSKAI…YIKIQMAFDT (226 aa). Position 34–41 (34–41) interacts with ATP; it reads GRNGSGKT.

Belongs to the ABC transporter superfamily. As to quaternary structure, the complex is composed of 2 ATP-binding proteins (YtrB and YtrE), 2 transmembrane proteins (YtrC and YtrD) and a solute-binding protein (YtrF).

The protein resides in the cell membrane. In terms of biological role, part of the ABC transporter complex YtrBCDEF that plays a role in acetoin utilization during stationary phase and sporulation. This Bacillus subtilis (strain 168) protein is ABC transporter ATP-binding protein YtrB (ytrB).